Reading from the N-terminus, the 680-residue chain is DNA-directed RNA polymerase subunit beta' (680 aa).

Zn(2+) is bound by residues cysteine 69, cysteine 71, cysteine 87, and cysteine 90. Residues aspartate 489, aspartate 491, and aspartate 493 each contribute to the Mg(2+) site.

It belongs to the RNA polymerase beta' chain family. RpoC1 subfamily. As to quaternary structure, in plastids the minimal PEP RNA polymerase catalytic core is composed of four subunits: alpha, beta, beta', and beta''. When a (nuclear-encoded) sigma factor is associated with the core the holoenzyme is formed, which can initiate transcription. Requires Mg(2+) as cofactor. It depends on Zn(2+) as a cofactor.

It localises to the plastid. Its subcellular location is the chloroplast. It catalyses the reaction RNA(n) + a ribonucleoside 5'-triphosphate = RNA(n+1) + diphosphate. DNA-dependent RNA polymerase catalyzes the transcription of DNA into RNA using the four ribonucleoside triphosphates as substrates. This Aethionema cordifolium (Lebanon stonecress) protein is DNA-directed RNA polymerase subunit beta'.